The chain runs to 623 residues: MAU2 chromatid cohesion factor homolog (623 aa).

3 TPR repeats span residues 96 to 129 (FDTA…SQNN), 451 to 484 (GGFY…ANAE), and 491 to 524 (SCSL…ASKI).

Belongs to the SCC4/mau-2 family. In terms of assembly, interacts with Nipped-B to form the cohesin loading complex.

The protein localises to the nucleus. It localises to the nucleoplasm. Its function is as follows. Required for association of the cohesin complex with chromatin during interphase. Plays a role in sister chromatid cohesion and normal progression through prometaphase. This Drosophila grimshawi (Hawaiian fruit fly) protein is MAU2 chromatid cohesion factor homolog.